The chain runs to 737 residues: Palmitoyltransferase akr1 (737 aa).

Residues 1–15 (MSSGNSSTGTHTNGN) show a composition bias toward low complexity. Residues 1 to 39 (MSSGNSSTGTHTNGNFATLGSSPPSAVGGKGRAIPPKVT) are disordered. The Cytoplasmic segment spans residues 1 to 313 (MSSGNSSTGT…WVRNKSLMSK (313 aa)). 5 ANK repeats span residues 96 to 125 (EGIT…DVNA), 130 to 159 (SVAT…DPLL), 163 to 192 (QGYN…PVDV), 196 to 225 (QGHT…HANA), and 228 to 258 (EGGL…DKFA). The next 2 membrane-spanning stretches (helical) occupy residues 314–334 (FFFL…SNMV) and 335–355 (VYAA…VAQK). Over 356-374 (AASQGPSEYRILQKTPYLS) the chain is Cytoplasmic. A helical membrane pass occupies residues 375–395 (GVFAGSLFWVGFRYVFYVLPV). At 396–401 (TYSTSP) the chain is on the lumenal side. The helical transmembrane segment at 402–422 (ILNGLFAIFFSLTTYFYIYSM) threads the bilayer. Residues 423 to 498 (VEDPGFVPKL…DNCVGANNLR (76 aa)) are Cytoplasmic-facing. Residues 455–505 (NFCVSCMVRRPLRSKHCKRCARCVAKHDHHCPWIDNCVGANNLRHFVLYIT) enclose the DHHC domain. The active-site S-palmitoyl cysteine intermediate is the Cys-485. The helical transmembrane segment at 499 to 519 (HFVLYITCLEVGIVLFVQLTF) threads the bilayer. Topologically, residues 520–548 (NYINSLPAPAQPQCNIINETLCDFVLRDT) are lumenal. A helical transmembrane segment spans residues 549–569 (FTLVLDLWVCIQLVWITMLVA). Over 570 to 737 (VQMIQISRNQ…LSVEDPEQGV (168 aa)) the chain is Cytoplasmic.

The protein belongs to the DHHC palmitoyltransferase family. AKR/ZDHHC17 subfamily.

The protein resides in the early endosome membrane. It localises to the golgi apparatus membrane. It catalyses the reaction L-cysteinyl-[protein] + hexadecanoyl-CoA = S-hexadecanoyl-L-cysteinyl-[protein] + CoA. Palmitoyltransferase specific for casein kinase 1. The chain is Palmitoyltransferase akr1 (akr1) from Aspergillus oryzae (strain ATCC 42149 / RIB 40) (Yellow koji mold).